A 1780-amino-acid polypeptide reads, in one-letter code: Protein TIC 214 (1780 aa).

6 helical membrane passes run 19 to 39 (IINSVVVVGLYYGFLTTFSIG), 68 to 88 (FIAGQLMMFISIYYAPLHLAL), 91 to 111 (PHTITVLALPYLLFHFFWNNN), 133 to 153 (VFLNNLIFQLFNHFILPSSML), 176 to 196 (VGWLIGHILFMKWVGLVLVWI), and 227 to 247 (IFSILLFITCVYYLGRTPSPI). The segment at 251 to 275 (KLKGTSETEERGGTKQDQEVSTEEA) is disordered. Residues 254–268 (GTSETEERGGTKQDQ) are compositionally biased toward basic and acidic residues.

The protein belongs to the TIC214 family. Part of the Tic complex.

Its subcellular location is the plastid. The protein localises to the chloroplast inner membrane. In terms of biological role, involved in protein precursor import into chloroplasts. May be part of an intermediate translocation complex acting as a protein-conducting channel at the inner envelope. In Draba nemorosa (Woodland whitlowgrass), this protein is Protein TIC 214.